Reading from the N-terminus, the 141-residue chain is VLSAADKSNVKACWGKIGSHAGEYGAEALERTFCSFPTTKTYFPHFDLSHGSAQVKAHGQKVADALTQAVAHMDDLPTAMSALSDLHAYKLRVDPVNFKFLSHCLLVTLACHHPAEFTPAVHASLDKFFSAVSTVLTSKYR.

A Globin domain is found at 1–141; sequence VLSAADKSNV…VSTVLTSKYR (141 aa). Residue serine 3 is modified to Phosphoserine. 2 positions are modified to N6-succinyllysine: lysine 7 and lysine 11. N6-acetyllysine; alternate is present on lysine 16. Lysine 16 is modified (N6-succinyllysine; alternate). At tyrosine 24 the chain carries Phosphotyrosine. At serine 35 the chain carries Phosphoserine. Lysine 40 is subject to N6-succinyllysine. Serine 49 carries the phosphoserine modification. Histidine 58 contacts O2. Histidine 87 is a heme b binding site. Serine 102 carries the post-translational modification Phosphoserine. The residue at position 108 (threonine 108) is a Phosphothreonine. Serine 124 carries the phosphoserine modification. Threonine 134 and threonine 137 each carry phosphothreonine. Serine 138 bears the Phosphoserine mark.

It belongs to the globin family. In terms of assembly, heterotetramer of two alpha chains and two beta chains. In terms of tissue distribution, red blood cells.

Functionally, involved in oxygen transport from the lung to the various peripheral tissues. Its function is as follows. Hemopressin acts as an antagonist peptide of the cannabinoid receptor CNR1. Hemopressin-binding efficiently blocks cannabinoid receptor CNR1 and subsequent signaling. The protein is Hemoglobin subunit alpha (HBA) of Felis catus (Cat).